Consider the following 360-residue polypeptide: Outer membrane protein P2 (360 aa).

A signal peptide spans 1–20 (MKKTLAALIVGAFAASAANA).

It belongs to the Gram-negative porin family. In terms of assembly, homotrimer.

The protein localises to the cell outer membrane. In terms of biological role, forms pores that allow passive diffusion of small molecules across the outer membrane. This chain is Outer membrane protein P2 (ompP2), found in Haemophilus influenzae.